The chain runs to 408 residues: Tripartite motif containing 13 (408 aa).

The segment at 10-58 adopts an RING-type zinc-finger fold; it reads CPICCSLFDDPRVLPCSHNFCKKCLDGVLEENSRTMQWRPSSFKCPTCR. The segment at 89 to 131 adopts a B box-type zinc-finger fold; the sequence is PKMPVCKEHSDQPLNIFCSTDLKLICGSCATTGEHKKHVFSSI. Positions 94, 97, 117, and 123 each coordinate Zn(2+). The helical transmembrane segment at 322 to 342 threads the bilayer; that stretch reads ILVVACLILLLVTFLCAYPFI.

It is found in the endoplasmic reticulum membrane. It participates in protein modification; protein ubiquitination. E3 ubiquitin ligase involved in the retrotranslocation and turnover of membrane and secretory proteins from the ER through a set of processes named ER-associated degradation (ERAD). This process acts on misfolded proteins as well as in the regulated degradation of correctly folded proteins. The protein is Tripartite motif containing 13 (trim13) of Xenopus tropicalis (Western clawed frog).